Here is a 138-residue protein sequence, read N- to C-terminus: Small ribosomal subunit protein uS9 (138 aa).

Positions 99–138 (DPDNRPPLKTEGYLTRDPRAKERKKYGLHKARKAPQYSKR) are disordered. Positions 100–118 (PDNRPPLKTEGYLTRDPRA) are enriched in basic and acidic residues. Residues 119–138 (KERKKYGLHKARKAPQYSKR) show a composition bias toward basic residues.

This sequence belongs to the universal ribosomal protein uS9 family.

The chain is Small ribosomal subunit protein uS9 from Nostoc punctiforme (strain ATCC 29133 / PCC 73102).